Here is a 217-residue protein sequence, read N- to C-terminus: Adenylate kinase (217 aa).

10 to 15 is an ATP binding site; that stretch reads GAGKGT. The NMP stretch occupies residues 30–59; that stretch reads STGDMLREAVAKGTELGKKAKEYMDKGELV. Residues T31, R36, 57 to 59, 85 to 88, and Q92 contribute to the AMP site; these read ELV and GFPR. The segment at 126–163 is LID; that stretch reads YRRTCRNCGAVYHLIYAPPKEDNKCDKCGGELYQRDDD. Residue R127 participates in ATP binding. The Zn(2+) site is built by C130 and C133. Residue 136–137 coordinates ATP; it reads VY. C150 and C153 together coordinate Zn(2+). AMP contacts are provided by R160 and R171. K199 provides a ligand contact to ATP.

This sequence belongs to the adenylate kinase family. In terms of assembly, monomer.

The protein localises to the cytoplasm. It catalyses the reaction AMP + ATP = 2 ADP. It participates in purine metabolism; AMP biosynthesis via salvage pathway; AMP from ADP: step 1/1. Its function is as follows. Catalyzes the reversible transfer of the terminal phosphate group between ATP and AMP. Plays an important role in cellular energy homeostasis and in adenine nucleotide metabolism. The chain is Adenylate kinase from Archaeoglobus fulgidus (strain ATCC 49558 / DSM 4304 / JCM 9628 / NBRC 100126 / VC-16).